We begin with the raw amino-acid sequence, 192 residues long: RNA pyrophosphohydrolase (192 aa).

Positions 6–149 (GYRPNVGIVI…KKDVYRKVMK (144 aa)) constitute a Nudix hydrolase domain. A Nudix box motif is present at residues 38–59 (GGINDNETAEQAMYRELYEEAG).

This sequence belongs to the Nudix hydrolase family. RppH subfamily. It depends on a divalent metal cation as a cofactor.

Its function is as follows. Accelerates the degradation of transcripts by removing pyrophosphate from the 5'-end of triphosphorylated RNA, leading to a more labile monophosphorylated state that can stimulate subsequent ribonuclease cleavage. The chain is RNA pyrophosphohydrolase from Histophilus somni (strain 129Pt) (Haemophilus somnus).